Here is a 369-residue protein sequence, read N- to C-terminus: Deoxyhypusine synthase (369 aa).

Residues 105–109 (SNLIS), 131–133 (TAG), E137, and D238 contribute to the NAD(+) site. 136 to 137 (EE) is a binding site for spermidine. A spermidine-binding site is contributed by D243. G283 provides a ligand contact to NAD(+). H288 is a binding site for spermidine. 308–309 (TA) provides a ligand contact to NAD(+). Spermidine is bound by residues 314 to 316 (GSD) and 323 to 329 (EAVSWGK). K329 functions as the Nucleophile in the catalytic mechanism. 342 to 343 (DA) is a binding site for NAD(+).

Belongs to the deoxyhypusine synthase family. NAD(+) serves as cofactor.

It catalyses the reaction [eIF5A protein]-L-lysine + spermidine = [eIF5A protein]-deoxyhypusine + propane-1,3-diamine. Its pathway is protein modification; eIF5A hypusination. Functionally, catalyzes the NAD-dependent oxidative cleavage of spermidine and the subsequent transfer of the butylamine moiety of spermidine to the epsilon-amino group of a critical lysine residue of the eIF-5A precursor protein to form the intermediate deoxyhypusine residue. This is the first step of the post-translational modification of that lysine into an unusual amino acid residue named hypusine. Hypusination is unique to mature eIF-5A factor and is essential for its function. This is Deoxyhypusine synthase (Dhps) from Mus musculus (Mouse).